Reading from the N-terminus, the 65-residue chain is KappaPI-actitoxin-Ael3a (65 aa).

The BPTI/Kunitz inhibitor domain occupies 5-55 (CLLPKKQGFCRARFPRFYYNSSTRRCEMFYYGGCGGNANNFNTLEECEKVC). 3 cysteine pairs are disulfide-bonded: Cys5-Cys55, Cys14-Cys38, and Cys30-Cys51.

This sequence belongs to the venom Kunitz-type family. Sea anemone type 2 potassium channel toxin subfamily.

The protein resides in the secreted. It is found in the nematocyst. Functionally, dual-function toxin that inhibits both serine proteases (trypsin Kd=124 nM) and voltage-gated potassium channels rKv1.1/KCNA1 (IC(50)=0.9 nM). The activity on the Kv1.1/KCNA1 is selective and reversible. The toxin presumably acts by blocking the channel pore in the open state. This chain is KappaPI-actitoxin-Ael3a, found in Anthopleura elegantissima (Green aggregating anemone).